Consider the following 297-residue polypeptide: RNA polymerase sigma-F factor (297 aa).

Residues 1–46 (MTVPASTAPQVPPQQDPQVPHPQEPREEPHEEPPSPPAAPRPQSRG) are disordered. Residues 10–22 (QVPPQQDPQVPHP) show a composition bias toward pro residues. Residues 23–33 (QEPREEPHEEP) are compositionally biased toward basic and acidic residues. The Polymerase core binding signature appears at 101–114 (DVVQVGTIGLINAI). Positions 264 to 283 (QSQISAELGVSQMHVSRLLA) form a DNA-binding region, H-T-H motif.

This sequence belongs to the sigma-70 factor family. SigB subfamily.

Functionally, sigma factors are initiation factors that promote the attachment of RNA polymerase to specific initiation sites and are then released. This sigma factor is required for normal spore maturation. The sequence is that of RNA polymerase sigma-F factor (sigF) from Kitasatospora aureofaciens (Streptomyces aureofaciens).